A 127-amino-acid polypeptide reads, in one-letter code: Transcription antitermination protein NusB (127 aa).

The protein belongs to the NusB family.

Functionally, involved in transcription antitermination. Required for transcription of ribosomal RNA (rRNA) genes. Binds specifically to the boxA antiterminator sequence of the ribosomal RNA (rrn) operons. The polypeptide is Transcription antitermination protein NusB (Lysinibacillus sphaericus (strain C3-41)).